A 378-amino-acid polypeptide reads, in one-letter code: MAKKVKKNEEITKKFGDERRKALDDALKNIEKDFGKGAVMRLGERAEQKVQVMSSGSLALDIALGAGGYPKGRIIEIYGPESSGKTTVALHAVAQAQKEGGIAAFIDAEHALDPAYAAALGVNIDELLLSQPDSGEQGLEIAGKLIDSGAVDLVVVDSVAALVPRAEIDGDIGDNHVGLQARMMSQAMRKLSASINKTKTIAIFINQLREKVGVMFGNPETTPGGRALKFYASVRLDVRGTTQIKGTGDQKDSSIGKETKIKVVKNKVAPPFKVAEVEIMYGEGISRTGELIKIASDLDIIQKAGAWFSYNGEKIGQGSENAKRYLADHPELFDEIDHKVRVKFGLLEDTEESAAVDPAAAKADELVLELDDAIEIED.

An ATP-binding site is contributed by 79–86 (GPESSGKT).

It belongs to the RecA family.

It localises to the cytoplasm. Its function is as follows. Can catalyze the hydrolysis of ATP in the presence of single-stranded DNA, the ATP-dependent uptake of single-stranded DNA by duplex DNA, and the ATP-dependent hybridization of homologous single-stranded DNAs. It interacts with LexA causing its activation and leading to its autocatalytic cleavage. The polypeptide is Protein RecA (Streptococcus equi subsp. zooepidemicus (strain MGCS10565)).